The primary structure comprises 158 residues: 6,7-dimethyl-8-ribityllumazine synthase (158 aa).

5-amino-6-(D-ribitylamino)uracil is bound by residues Phe23, 61-63 (SFE), and 85-87 (AVI). 90–91 (ET) contributes to the (2S)-2-hydroxy-3-oxobutyl phosphate binding site. His93 (proton donor) is an active-site residue. Position 118 (Phe118) interacts with 5-amino-6-(D-ribitylamino)uracil. Arg132 contacts (2S)-2-hydroxy-3-oxobutyl phosphate.

The protein belongs to the DMRL synthase family.

It carries out the reaction (2S)-2-hydroxy-3-oxobutyl phosphate + 5-amino-6-(D-ribitylamino)uracil = 6,7-dimethyl-8-(1-D-ribityl)lumazine + phosphate + 2 H2O + H(+). Its pathway is cofactor biosynthesis; riboflavin biosynthesis; riboflavin from 2-hydroxy-3-oxobutyl phosphate and 5-amino-6-(D-ribitylamino)uracil: step 1/2. Catalyzes the formation of 6,7-dimethyl-8-ribityllumazine by condensation of 5-amino-6-(D-ribitylamino)uracil with 3,4-dihydroxy-2-butanone 4-phosphate. This is the penultimate step in the biosynthesis of riboflavin. This chain is 6,7-dimethyl-8-ribityllumazine synthase, found in Prochlorococcus marinus (strain MIT 9215).